The sequence spans 183 residues: Photosystem II extrinsic protein V (183 aa).

The first 31 residues, 1-31 (MTFGHCRRASTLRSAFVLGLCGLLLAGCSGA), serve as a signal peptide directing secretion. Positions 84, 87, 88, and 138 each coordinate heme c.

Belongs to the cytochrome c family. PsbV subfamily. As to quaternary structure, PSII is composed of 1 copy each of membrane proteins PsbA, PsbB, PsbC, PsbD, PsbE, PsbF, PsbH, PsbI, PsbJ, PsbK, PsbL, PsbM, PsbT, PsbX, Psb30/Ycf12, peripheral proteins PsbO, CyanoQ (PsbQ), PsbU, PsbV and a large number of cofactors. It forms dimeric complexes. Heme c is required as a cofactor.

The protein localises to the cell inner membrane. Its function is as follows. Probably one of the extrinsic, lumenal subunits of photosystem II (PSII). PSII is a light-driven water plastoquinone oxidoreductase, using light energy to abstract electrons from H(2)O, generating a proton gradient subsequently used for ATP formation. The extrinsic proteins stabilize the structure of photosystem II oxygen-evolving complex (OEC), the ion environment of oxygen evolution and protect the OEC against heat-induced inactivation. Low-potential cytochrome c that plays a role in the OEC of PSII. This chain is Photosystem II extrinsic protein V (psbV1), found in Gloeobacter violaceus (strain ATCC 29082 / PCC 7421).